The primary structure comprises 4151 residues: Mycoketide-CoA synthase (4151 aa).

A coiled-coil region spans residues 2–32; the sequence is VDQLQHATEALRKALVQVERLKRTNRALLER. Residues 34 to 457 enclose the Ketosynthase family 3 (KS3) 1 domain; sequence SEPIAIVGMS…GTNAHVIIEA (424 aa). Module regions lie at residues 35 to 2038 and 2057 to 4070; these read EPIA…RTEL and DPIA…RREL. Catalysis depends on C203, which acts as the Acyl-thioester intermediate; for beta-ketoacyl synthase 1 activity. Active-site for beta-ketoacyl synthase 1 activity residues include H338 and H379. The interval 559–880 is acyltransferase 1; that stretch reads VFVFPGQGSQ…AASAFVAGVA (322 aa). The active-site Acyl-ester intermediate; for acyltransferase 1 activity is the S650. The tract at residues 926–1048 is N-terminal hotdog fold 1; it reads HPLLGAVVDL…GILRPGSVEP (123 aa). Residues 926-1194 are dehydratase 1; that stretch reads HPLLGAVVDL…VARPVTERQL (269 aa). One can recognise a PKS/mFAS DH 1 domain in the interval 926 to 1195; it reads HPLLGAVVDL…ARPVTERQLL (270 aa). H958 functions as the Proton acceptor; for dehydratase activity 1 in the catalytic mechanism. The tract at residues 1060–1195 is C-terminal hotdog fold 1; it reads AVTVDVADGY…ARPVTERQLL (136 aa). Residue D1120 is the Proton donor; for dehydratase activity 1 of the active site. An enoyl reductase 1 region spans residues 1366–1671; the sequence is GTFENLRLEP…QARHTGKVVM (306 aa). The tract at residues 1680–1858 is beta-ketoacyl reductase 1; that stretch reads GTVLITGGTG…AISLGWGLWD (179 aa). The active-site For beta-ketoacyl reductase 1 activity is Y1828. Residues 1963-2038 enclose the Carrier 1 domain; the sequence is AVLLGLVRLH…RLASYIRTEL (76 aa). S1998 is subject to O-(pantetheine 4'-phosphoryl)serine. Residues 2056–2480 enclose the Ketosynthase family 3 (KS3) 2 domain; it reads EDPIAIVGMA…GTNAHVIIEA (425 aa). C2226 functions as the Acyl-thioester intermediate; for beta-ketoacyl synthase 2 activity in the catalytic mechanism. Residues H2361 and H2402 each act as for beta-ketoacyl synthase 2 activity in the active site. The segment at 2582 to 2893 is acyltransferase 2; that stretch reads VFVFPGQGSQ…AVAQGFVTGM (312 aa). S2672 (acyl-ester intermediate; for acyltransferase 2 activity) is an active-site residue. Positions 2940–3062 are N-terminal hotdog fold 2; the sequence is HALLGAVIDL…GALRAGSAEP (123 aa). The dehydratase 2 stretch occupies residues 2940–3215; the sequence is HALLGAVIDL…ARPVTDQQLR (276 aa). In terms of domain architecture, PKS/mFAS DH 2 spans 2940–3215; it reads HALLGAVIDL…ARPVTDQQLR (276 aa). The Proton acceptor; for dehydratase activity 2 role is filled by H2972. Residues 3074 to 3215 form a C-terminal hotdog fold 2 region; that stretch reads AVPVEVADGY…ARPVTDQQLR (142 aa). The Proton donor; for dehydratase activity 2 role is filled by D3135. An enoyl reductase 2 region spans residues 3395–3701; sequence GTFENLRLEL…QARHTGKVVM (307 aa). Positions 3710–3888 are beta-ketoacyl reductase 2; it reads GTVLITGGTG…AISLGWGLWD (179 aa). Residue Y3858 is the For beta-ketoacyl reductase 2 activity of the active site. One can recognise a Carrier 2 domain in the interval 3995 to 4070; the sequence is AVLLDLVRSH…ALAGYMRREL (76 aa). S4030 is modified (O-(pantetheine 4'-phosphoryl)serine).

Forms a large supramolecular assembly mediated through specific interactions between the N- and C-terminus linkers.

The enzyme catalyses a medium-chain fatty acyl-CoA + 5 (S)-methylmalonyl-CoA + 5 malonyl-CoA + 22 NADPH + 32 H(+) = a mycoketide-CoA + 10 CO2 + 22 NADP(+) + 10 CoA + 11 H2O. The protein operates within lipid metabolism; fatty acid metabolism. In terms of biological role, involved in the synthesis of beta-D-mannosyl phosphomycoketide (MPM), an antigenic mycobacterial polyketide. Binds a fatty acyl-CoA as a starter unit, and extends it by five rounds of alternative additions of malonyl-CoA and methylmalonyl-CoA extender units. Depending on the starter unit, the enzyme forms mycoketide-CoAs of different lengths. Shows preference for small-/medium-chain starter fatty acyl substrates. Uses a hybrid modularly iterative mechanism, by forming a supramolecular assembly to perform repetitive cycles of iterations. This chain is Mycoketide-CoA synthase, found in Mycobacterium tuberculosis (strain ATCC 25618 / H37Rv).